A 231-amino-acid polypeptide reads, in one-letter code: Small ribosomal subunit protein uS3 (231 aa).

A KH type-2 domain is found at 39–107 (IRKHIMKAIP…DVSLNIVEIR (69 aa)).

This sequence belongs to the universal ribosomal protein uS3 family. Part of the 30S ribosomal subunit. Forms a tight complex with proteins S10 and S14.

In terms of biological role, binds the lower part of the 30S subunit head. Binds mRNA in the 70S ribosome, positioning it for translation. The protein is Small ribosomal subunit protein uS3 of Rhizorhabdus wittichii (strain DSM 6014 / CCUG 31198 / JCM 15750 / NBRC 105917 / EY 4224 / RW1) (Sphingomonas wittichii).